Here is a 284-residue protein sequence, read N- to C-terminus: Tetraspanin-10 (284 aa).

Over 1 to 11 the chain is Cytoplasmic; it reads MGMGTSTFVIR. A helical membrane pass occupies residues 12–32; that stretch reads WVNLLTMLLAVAVIIFGVWMS. Topologically, residues 33-43 are extracellular; the sequence is THNDGCRRSLT. A helical transmembrane segment spans residues 44–64; the sequence is FPVIALGGFIFLISIIGFLGA. The Cytoplasmic portion of the chain corresponds to 65–75; it reads CKRSVALLWIY. The chain crosses the membrane as a helical span at residues 76-96; sequence LAVLLIVLIAILVFTVLAFIV. At 97-228 the chain is on the extracellular side; it reads TNNGSGHTNP…AGVAQYMKTE (132 aa). N-linked (GlcNAc...) asparagine glycans are attached at residues N99, N128, and N183. The helical transmembrane segment at 229-249 threads the bilayer; it reads WRLVAIFNVVLFVVLISSLLS. Residues 250–284 are Cytoplasmic-facing; that stretch reads TRFDSEQSFGLLNGLVQISNITFKDCQTTTVPKQF.

Belongs to the tetraspanin (TM4SF) family.

Its subcellular location is the membrane. May be involved in the regulation of cell differentiation. This Arabidopsis thaliana (Mouse-ear cress) protein is Tetraspanin-10 (TET10).